The chain runs to 1493 residues: DNA excision repair protein ERCC-6 (1493 aa).

Positions 1 to 39 (MPNEGIPHSSQTQEQDCLQSQPVSNNEEMAIKQESGGDG) are disordered. The tract at residues 1–510 (MPNEGIPHSS…GFLFKKLFKY (510 aa)) is N-terminal domain; essential for its chromatin remodeling activity. Residues 8-27 (HSSQTQEQDCLQSQPVSNNE) are compositionally biased toward polar residues. A Phosphoserine; by ATM modification is found at Ser-10. Residue Ser-158 is modified to Phosphoserine; by CDK2. Position 170 is an N6-methylated lysine; by EHMT2 (Lys-170). Lys-205 is covalently cross-linked (Glycyl lysine isopeptide (Lys-Gly) (interchain with G-Cter in SUMO3)). Lys-255 participates in a covalent cross-link: Glycyl lysine isopeptide (Lys-Gly) (interchain with G-Cter in SUMO2). 2 disordered regions span residues 287-323 (KQGC…VLSK) and 344-453 (GKVG…GRYR). Lys-297 carries the N6-methylated lysine; by EHMT2 modification. Basic and acidic residues predominate over residues 353-363 (RPWESDMRPEA). The segment covering 364–392 (EGDSEGEESEYFPTEEEEEEEDDEVEGAE) has biased composition (acidic residues). Ser-429 and Ser-430 each carry phosphoserine. The residue at position 448 (Lys-448) is an N6-methylated lysine; by EHMT2. A phosphoserine mark is found at Ser-486 and Ser-489. One can recognise a Helicase ATP-binding domain in the interval 519–695 (WELHCQQAGG…WSLFDFIFPG (177 aa)). Residue 532 to 539 (DEMGLGKT) coordinates ATP. Positions 646 to 649 (DEGH) match the DEAH box motif. Positions 843 to 1002 (VVESLLKIWH…RRFFKSNDLY (160 aa)) constitute a Helicase C-terminal domain. Disordered stretches follow at residues 1042 to 1147 (PAFG…DESI), 1181 to 1247 (HKSK…EQSN), and 1318 to 1384 (RGIS…SGPL). N6-methylated lysine; by EHMT2 is present on Lys-1054. Residues 1123 to 1141 (ISGNGECSNSSGTGKTSMP) show a composition bias toward polar residues. Ser-1142 carries the post-translational modification Phosphoserine. Residues 1200-1210 (LRPKQKPKNSK) show a composition bias toward basic residues. Composition is skewed to basic and acidic residues over residues 1211 to 1221 (HCRDAKFEGTR) and 1232 to 1247 (QKQD…EQSN). The span at 1327 to 1336 (KKSRFGKKRN) shows a compositional bias: basic residues. Residues 1337–1351 (SNFSVQHPSSTSPTE) show a composition bias toward polar residues. A Phosphoserine modification is found at Ser-1348. Residues 1352-1376 (KCQDGIMKKEGKDNVPEHFSGRAED) show a composition bias toward basic and acidic residues. Positions 1386 to 1398 (SSSLLAKMRARNH) match the CSA-interacting motif (CIM) motif. A ubiquitin-binding domain (UBD) region spans residues 1400–1428 (ILPERLESESGHLQEASALLPTTEHDDLL). The tract at residues 1429 to 1493 (VEMRNFIAFQ…GIWKLKPEYC (65 aa)) is winged-helix domain (WHD). The interval 1446–1493 (STREILQEFESKLSASQSCVFRELLRNLCTFHRTSGGEGIWKLKPEYC) is essential for its interaction with RNA polymerase II, transcription-coupled nucleotide excision repair activity, association with chromatin after UV irradiation and for mediating the UV-induced translocation of ERRC8 to the nuclear matrix.

This sequence belongs to the SNF2/RAD54 helicase family. As to quaternary structure, homodimer. Binds DNA. Interacts with ERCC8. Interacts with RNA polymerase II; interaction is enhanced by UV irradiation. Component of the B-WICH complex, at least composed of SMARCA5/SNF2H, BAZ1B/WSTF, SF3B1, DEK, MYO1C, ERCC6, MYBBP1A and DDX21. Interacts with KIAA1530/UVSSA. Interacts with ELOA and CUL5; the interaction is induced by DNA damaging agents or by inhibitors of RNA polymerase II elongation. Interacts (via WHD region) with RIF1. Interacts with SMARCC2/BAF170, SMARCB1/BAF47 and the neuron-specific chromatin remodeling complex (nBAF complex). Interacts with ERCC5/XPG (via C-terminus); the interaction stimulates ERCC6/CSB binding to the DNA repair bubble and ERCC6/CSB ATPase activity. May form a complex composed of RNA polymerase II, ERCC6/CSB and ERCC5/XPG which associates with the DNA repair bubble during transcription-coupled nucleotide excision repair. Interacts with CAND1, CSTF1, DDX3X, DDX5, DDX17, DDX23, DHX36, HDAC1, HNRNPU, MTA2, PRPF3, PSMD3, RBBP4, SFPQ, SMARCA1, SMARCA2, TOP1, USP7, XRCC5, COPS3, COPS4, COPS6, DDX1, DDX41, GATAD2A, GATAD2B, PRPF4, PSMC5, SF3B2, CTR9, NONO, PSMD12 and TOP2A. Post-translationally, phosphorylated in a cell cycle-dependent manner at Ser-158 by cyclin A-CDK2 and at Ser-10 by ATM in response to DNA damage. Phosphorylation at these two sites promotes the intramolecular interaction of the N-terminal domain with the helicase ATP-binding domain, thereby probably releasing the inhibitory effect of the N-terminal domain on its ATPase activity. Phosphorylation is essential for its chromatin remodeling activity. Ubiquitinated at the C-terminus. Ubiquitination by the CSA complex leads to ERCC6 proteasomal degradation in a UV-dependent manner. Stabilized following interaction with KIAA1530/UVSSA, which promotes recruitment of deubiquitinating enzyme USP7, leading to deubiquitination of ERCC6 thereby preventing UV-induced degradation of ERCC6 by the proteasome. In terms of processing, sumoylation at Lys-205 in an UV-radiation-dependent manner is essential for its transcription-coupled nucleotide excision repair activity.

Its subcellular location is the nucleus. It localises to the chromosome. It carries out the reaction ATP + H2O = ADP + phosphate + H(+). In terms of biological role, essential factor involved in transcription-coupled nucleotide excision repair (TC-NER), a process during which RNA polymerase II-blocking lesions are rapidly removed from the transcribed strand of active genes. Plays a central role in the initiation of the TC-NER process: specifically recognizes and binds RNA polymerase II stalled at a lesion, and mediates recruitment of ERCC8/CSA, initiating DNA damage excision by TFIIH recruitment. Upon DNA-binding, it locally modifies DNA conformation by wrapping the DNA around itself, thereby modifying the interface between stalled RNA polymerase II and DNA. Acts as a chromatin remodeler at DSBs; DNA-dependent ATPase-dependent activity is essential for this function. Plays an important role in regulating the choice of the DNA double-strand breaks (DSBs) repair pathway and G2/M checkpoint activation; DNA-dependent ATPase activity is essential for this function. Regulates the DNA repair pathway choice by inhibiting non-homologous end joining (NHEJ), thereby promoting the homologous recombination (HR)-mediated repair of DSBs during the S/G2 phases of the cell cycle. Mediates the activation of the ATM- and CHEK2-dependent DNA damage responses thus preventing premature entry of cells into mitosis following the induction of DNA DSBs. Remodels chromatin by evicting histones from chromatin flanking DSBs, limiting RIF1 accumulation at DSBs thereby promoting BRCA1-mediated HR. Required for stable recruitment of ELOA and CUL5 to DNA damage sites. Also involved in UV-induced translocation of ERCC8 to the nuclear matrix. Essential for neuronal differentiation and neuritogenesis; regulates transcription and chromatin remodeling activities required during neurogenesis. The chain is DNA excision repair protein ERCC-6 from Homo sapiens (Human).